The sequence spans 188 residues: Mediator of RNA polymerase II transcription subunit 11 (188 aa).

Residues 46–72 (KNKMEDNANNFKKLITQVENELSAQMQ) are a coiled coil. The interval 116–188 (DPTSDEPQTT…MTDDDDDMEQ (73 aa)) is disordered. Acidic residues predominate over residues 123–141 (QTTEEDEEDGSDDLNEDGA). Residues 146 to 155 (SSTVTSSTTD) are compositionally biased toward low complexity. Positions 171–180 (SQEESGRQMT) are enriched in basic and acidic residues.

It belongs to the Mediator complex subunit 11 family. Component of the Mediator complex.

It is found in the nucleus. In terms of biological role, component of the Mediator complex, a coactivator involved in the regulated transcription of nearly all RNA polymerase II-dependent genes. Mediator functions as a bridge to convey information from gene-specific regulatory proteins to the basal RNA polymerase II transcription machinery. Mediator is recruited to promoters by direct interactions with regulatory proteins and serves as a scaffold for the assembly of a functional pre-initiation complex with RNA polymerase II and the general transcription factors. The polypeptide is Mediator of RNA polymerase II transcription subunit 11 (mdt-11) (Caenorhabditis elegans).